We begin with the raw amino-acid sequence, 629 residues long: tRNA uridine 5-carboxymethylaminomethyl modification enzyme MnmG (629 aa).

FAD-binding positions include 14 to 19 (GAGHAG), Val126, and Ser181. 273–287 (GPRYCPSIEDKVVRF) is a binding site for NAD(+). Position 370 (Gln370) interacts with FAD.

This sequence belongs to the MnmG family. As to quaternary structure, homodimer. Heterotetramer of two MnmE and two MnmG subunits. It depends on FAD as a cofactor.

The protein resides in the cytoplasm. Functionally, NAD-binding protein involved in the addition of a carboxymethylaminomethyl (cmnm) group at the wobble position (U34) of certain tRNAs, forming tRNA-cmnm(5)s(2)U34. The protein is tRNA uridine 5-carboxymethylaminomethyl modification enzyme MnmG of Bacillus cereus (strain ATCC 14579 / DSM 31 / CCUG 7414 / JCM 2152 / NBRC 15305 / NCIMB 9373 / NCTC 2599 / NRRL B-3711).